The sequence spans 623 residues: uncharacterized protein (623 aa).

Residues 157-166 (LNESPLRDQQ) show a composition bias toward basic and acidic residues. Residues 157 to 237 (LNESPLRDQQ…QGLPDHNNSI (81 aa)) are disordered. Polar residues predominate over residues 167 to 177 (ESSTPSKNSTL). Residues 193-210 (AFRPLPSPSRRSSQSAPA) show a composition bias toward low complexity.

This is an uncharacterized protein from Macaca fascicularis (Crab-eating macaque).